Reading from the N-terminus, the 663-residue chain is Translation factor guf1, mitochondrial (663 aa).

The transit peptide at 1-51 directs the protein to the mitochondrion; sequence MRGCLQVLRWLSTSTARRPVSSRPLHEIFPKSEFRRPFTSTILRQAQASRN. Residues 65-245 enclose the tr-type G domain; it reads ERFRNFCIVA…TVIERIPAPV (181 aa). Residues 74–81, 138–142, and 192–195 each bind GTP; these read AHVDHGKS, DTPGH, and NKVD.

Belongs to the TRAFAC class translation factor GTPase superfamily. Classic translation factor GTPase family. LepA subfamily.

The protein resides in the mitochondrion inner membrane. The enzyme catalyses GTP + H2O = GDP + phosphate + H(+). Promotes mitochondrial protein synthesis. May act as a fidelity factor of the translation reaction, by catalyzing a one-codon backward translocation of tRNAs on improperly translocated ribosomes. Binds to mitochondrial ribosomes in a GTP-dependent manner. This Talaromyces marneffei (strain ATCC 18224 / CBS 334.59 / QM 7333) (Penicillium marneffei) protein is Translation factor guf1, mitochondrial (guf1).